A 280-amino-acid polypeptide reads, in one-letter code: Tryptophan 2,3-dioxygenase (280 aa).

Residues 49-53 (FIIIH), tyrosine 111, and arginine 115 contribute to the substrate site. Histidine 238 is a heme binding site. Substrate is bound at residue threonine 252.

This sequence belongs to the tryptophan 2,3-dioxygenase family. In terms of assembly, homotetramer. Requires heme as cofactor.

It catalyses the reaction L-tryptophan + O2 = N-formyl-L-kynurenine. It participates in amino-acid degradation; L-tryptophan degradation via kynurenine pathway; L-kynurenine from L-tryptophan: step 1/2. In terms of biological role, heme-dependent dioxygenase that catalyzes the oxidative cleavage of the L-tryptophan (L-Trp) pyrrole ring and converts L-tryptophan to N-formyl-L-kynurenine. Catalyzes the oxidative cleavage of the indole moiety. The polypeptide is Tryptophan 2,3-dioxygenase (Geobacillus thermodenitrificans (strain NG80-2)).